A 402-amino-acid polypeptide reads, in one-letter code: Argininosuccinate synthase (402 aa).

9–17 is a binding site for ATP; it reads AYSGGLDTS. Y86 lines the L-citrulline pocket. Residue G116 coordinates ATP. L-aspartate contacts are provided by T118, N122, and D123. N122 contacts L-citrulline. 5 residues coordinate L-citrulline: R126, S174, S183, E259, and Y271.

It belongs to the argininosuccinate synthase family. Type 1 subfamily. As to quaternary structure, homotetramer.

Its subcellular location is the cytoplasm. The enzyme catalyses L-citrulline + L-aspartate + ATP = 2-(N(omega)-L-arginino)succinate + AMP + diphosphate + H(+). The protein operates within amino-acid biosynthesis; L-arginine biosynthesis; L-arginine from L-ornithine and carbamoyl phosphate: step 2/3. This Geobacillus sp. (strain WCH70) protein is Argininosuccinate synthase.